The sequence spans 124 residues: Urease subunit beta (124 aa).

It belongs to the urease beta subunit family. In terms of assembly, heterotrimer of UreA (gamma), UreB (beta) and UreC (alpha) subunits. Three heterotrimers associate to form the active enzyme.

It localises to the cytoplasm. The catalysed reaction is urea + 2 H2O + H(+) = hydrogencarbonate + 2 NH4(+). The protein operates within nitrogen metabolism; urea degradation; CO(2) and NH(3) from urea (urease route): step 1/1. The sequence is that of Urease subunit beta from Ureaplasma parvum serovar 3 (strain ATCC 27815 / 27 / NCTC 11736).